A 191-amino-acid chain; its full sequence is CASP-like protein 4C3 (191 aa).

At 1 to 29 (METGDSAVKSSQDVHYYGKSTAQKHRRSN) the chain is on the cytoplasmic side. Residues 30-50 (GIILIFRALTFSFSLTSVIVM) traverse the membrane as a helical segment. The Extracellular segment spans residues 51 to 72 (GTNRHRIDAQSRVAWYDFDPFR). Residues 73–93 (YVLAVNAIICIYSFVEIWLAV) traverse the membrane as a helical segment. Residues 94–116 (YTYLKDTLFLPETFQVWFDYGHD) are Cytoplasmic-facing. Residues 117-137 (QGFAYLLFSANSAGIAMAQLL) form a helical membrane-spanning segment. Over 138–162 (QSGNSLIHGAYRCSDAGVFCTQARA) the chain is Extracellular. A helical transmembrane segment spans residues 163 to 183 (SIGLGFGAFLFLALSSLLTGL). The Cytoplasmic portion of the chain corresponds to 184–191 (RVARWYFS).

It belongs to the Casparian strip membrane proteins (CASP) family. Homodimer and heterodimers.

Its subcellular location is the cell membrane. This chain is CASP-like protein 4C3, found in Physcomitrium patens (Spreading-leaved earth moss).